A 460-amino-acid polypeptide reads, in one-letter code: Ammonium transporter Rh type B (460 aa).

Residues 1–10 (MTGYSTNMRI) are Cytoplasmic-facing. Residues 11-31 (KLPVFCLLLEFITIILFAVFV) traverse the membrane as a helical segment. Topologically, residues 32 to 62 (RYDHESDAKQWHDEMRNHSVQNAENDFYFRY) are extracellular. N-linked (GlcNAc...) asparagine glycosylation occurs at N48. The chain crosses the membrane as a helical span at residues 63–83 (PSFQDVHVMIFIGFGFLMTFL). Residues 84–87 (KRYG) are Cytoplasmic-facing. The chain crosses the membrane as a helical span at residues 88–108 (FSSVAFNFLIAAFGLQWSTLI). The Extracellular segment spans residues 109 to 125 (QGFFHGFHDGKIHVGIE). A helical transmembrane segment spans residues 126 to 146 (SMINADFCTGAVLISFGAVLG). Over 147 to 150 (KTSP) the chain is Cytoplasmic. Residues 151–171 (VQLIVMTLIEVTLFGINEYII) traverse the membrane as a helical segment. Residues 172–179 (LNIVGAKD) are Extracellular-facing. Residues 180 to 202 (AGGSMTIHTFGAYFGLIVSRVLY) form a helical membrane-spanning segment. At 203–220 (RDDLEKSRQREGSVYHSD) the chain is on the cytoplasmic side. A helical membrane pass occupies residues 221-241 (LFAMIGTIYLWMFWPSFNSAI). At 242–252 (TAHGDDQHRTV) the chain is on the extracellular side. A helical membrane pass occupies residues 253-273 (MNTYYSLAACTLATFGFSALL). Residues 274 to 283 (NGEGKLDMVH) lie on the Cytoplasmic side of the membrane. A helical membrane pass occupies residues 284–304 (IQNAALAGGVAVGTSGEMMLT). P305 is a topological domain (extracellular). A helical transmembrane segment spans residues 306-326 (FGAMIAGTLAGMISVLGYKYL). At 327–347 (TPVLDSKLKIQDTCGVHNLHG) the chain is on the cytoplasmic side. The chain crosses the membrane as a helical span at residues 348–368 (MPGILGALIGAIVALFATAEI). At 369-394 (YGAGMEDVFPLISDGSRTAKQQSLYQ) the chain is on the extracellular side. The chain crosses the membrane as a helical span at residues 395 to 415 (FLALLVALGFAILGGLVVGFI). Residues 416 to 460 (LKLPIFGTPSDAECFEDAVYWEVPGGEGHQQLTVVINNEDPDTQA) lie on the Cytoplasmic side of the membrane.

Belongs to the ammonium transporter (TC 2.A.49) family. Rh subfamily.

It is found in the basolateral cell membrane. The protein resides in the cytoplasmic vesicle membrane. Functions as a specific ammonium transporter. The sequence is that of Ammonium transporter Rh type B (rhbg) from Xenopus tropicalis (Western clawed frog).